An 86-amino-acid polypeptide reads, in one-letter code: Exodeoxyribonuclease 7 small subunit (86 aa).

Belongs to the XseB family. As to quaternary structure, heterooligomer composed of large and small subunits.

It is found in the cytoplasm. The enzyme catalyses Exonucleolytic cleavage in either 5'- to 3'- or 3'- to 5'-direction to yield nucleoside 5'-phosphates.. Its function is as follows. Bidirectionally degrades single-stranded DNA into large acid-insoluble oligonucleotides, which are then degraded further into small acid-soluble oligonucleotides. The sequence is that of Exodeoxyribonuclease 7 small subunit from Bacillus licheniformis (strain ATCC 14580 / DSM 13 / JCM 2505 / CCUG 7422 / NBRC 12200 / NCIMB 9375 / NCTC 10341 / NRRL NRS-1264 / Gibson 46).